The chain runs to 517 residues: Sugar transport protein MST1 (517 aa).

The Cytoplasmic segment spans residues 1 to 25 (MAGGVIVANDGDGSAVDHGGRLTFS). Residues 26–46 (VVITCLVAASGGLIFGYDVGI) traverse the membrane as a helical segment. Residues 47 to 83 (SGGVSTMEPFLRRFFPGVVRRMAEARPGNEYCVYDSQ) lie on the Extracellular side of the membrane. The helical transmembrane segment at 84-104 (ALTAFTSSLYVAGLVASLVAS) threads the bilayer. At 105–120 (RVTRAMGRQAVMVMGG) the chain is on the cytoplasmic side. The chain crosses the membrane as a helical span at residues 121-141 (ALFFAGGAVTGFAVNIAMLIV). At 142–143 (GR) the chain is on the extracellular side. Residues 144–164 (MLLGFGVGFTNQAAPLFLAEM) traverse the membrane as a helical segment. The Cytoplasmic segment spans residues 165–170 (APTRWR). A helical transmembrane segment spans residues 171–191 (GSLTAGFQFFLAVGVVIATVT). Residues 192–203 (NYFASRVPWGWR) lie on the Extracellular side of the membrane. Residues 204 to 224 (LSLGLAGAPAVVIFLGALFLT) form a helical membrane-spanning segment. Residues 225–288 (DTPSSLVMRG…AARREYRPYL (64 aa)) are Cytoplasmic-facing. The chain crosses the membrane as a helical span at residues 289 to 309 (VFAVAMPMFFQLTGVIVISFF). At 310–325 (SPLVFRTVGFGSNAAL) the chain is on the extracellular side. The helical transmembrane segment at 326–346 (MGNVILGAVNLVCLMLSTLVI) threads the bilayer. At 347–352 (DRYGRK) the chain is on the cytoplasmic side. A helical transmembrane segment spans residues 353-373 (VLFMVGGAIMIIAQVGVAWIM). At 374 to 389 (GAQVGKNGSEAMARPY) the chain is on the extracellular side. Residues 390–410 (AVAVVAFTCLHTAGFGWSWGP) form a helical membrane-spanning segment. Residues 411 to 430 (LGWVIPGEIFPVDIRSAGQA) lie on the Cytoplasmic side of the membrane. The helical transmembrane segment at 431–451 (MNVSIGLGLTFVQTQSFLAML) threads the bilayer. The Extracellular segment spans residues 452–456 (CRFRY). The chain crosses the membrane as a helical span at residues 457–477 (GTFAYYAAWVAVMTVFIAVFL). At 478-517 (PETKGVPLESMATVWARHWYWKRFAREQPKTSADEPTGTY) the chain is on the cytoplasmic side.

The protein belongs to the major facilitator superfamily. Sugar transporter (TC 2.A.1.1) family.

The protein localises to the membrane. In terms of biological role, mediates active uptake of hexoses by sugar:proton symport. The polypeptide is Sugar transport protein MST1 (Oryza sativa subsp. japonica (Rice)).